The sequence spans 871 residues: Alanine--tRNA ligase (871 aa).

Zn(2+) contacts are provided by histidine 590, histidine 594, cysteine 694, and histidine 698.

The protein belongs to the class-II aminoacyl-tRNA synthetase family. Requires Zn(2+) as cofactor.

Its subcellular location is the cytoplasm. The catalysed reaction is tRNA(Ala) + L-alanine + ATP = L-alanyl-tRNA(Ala) + AMP + diphosphate. Its function is as follows. Catalyzes the attachment of alanine to tRNA(Ala) in a two-step reaction: alanine is first activated by ATP to form Ala-AMP and then transferred to the acceptor end of tRNA(Ala). Also edits incorrectly charged Ser-tRNA(Ala) and Gly-tRNA(Ala) via its editing domain. This is Alanine--tRNA ligase from Thermoplasma acidophilum (strain ATCC 25905 / DSM 1728 / JCM 9062 / NBRC 15155 / AMRC-C165).